Consider the following 205-residue polypeptide: Ribosomal RNA small subunit methyltransferase G (205 aa).

S-adenosyl-L-methionine is bound by residues Gly-66, Phe-71, 119–120 (IE), and Arg-135.

This sequence belongs to the methyltransferase superfamily. RNA methyltransferase RsmG family.

It localises to the cytoplasm. It carries out the reaction guanosine(527) in 16S rRNA + S-adenosyl-L-methionine = N(7)-methylguanosine(527) in 16S rRNA + S-adenosyl-L-homocysteine. Its function is as follows. Specifically methylates the N7 position of guanine in position 527 of 16S rRNA. The polypeptide is Ribosomal RNA small subunit methyltransferase G (Rhizobium rhizogenes (strain K84 / ATCC BAA-868) (Agrobacterium radiobacter)).